A 182-amino-acid polypeptide reads, in one-letter code: DOMON domain-containing protein Y73F4A.1 (182 aa).

The first 18 residues, 1–18 (MFVLAIVFAFVFIPSSSS), serve as a signal peptide directing secretion. In terms of domain architecture, DOMON spans 26–143 (ELVSMNWNVK…CLNWMVVPGG (118 aa)). 2 N-linked (GlcNAc...) asparagine glycosylation sites follow: Asn47 and Asn128.

The protein localises to the secreted. The polypeptide is DOMON domain-containing protein Y73F4A.1 (Caenorhabditis elegans).